The chain runs to 125 residues: Large ribosomal subunit protein eL32 (125 aa).

The protein belongs to the eukaryotic ribosomal protein eL32 family.

In Sulfolobus acidocaldarius (strain ATCC 33909 / DSM 639 / JCM 8929 / NBRC 15157 / NCIMB 11770), this protein is Large ribosomal subunit protein eL32 (rpl32e).